Here is a 231-residue protein sequence, read N- to C-terminus: Ion-translocating oxidoreductase complex subunit E (231 aa).

Transmembrane regions (helical) follow at residues 18–38, 39–59, 63–83, 86–106, 125–145, and 182–202; these read ALVQLLGLCPLLAVTSTATNA, LGLGLATTLVLTLTNLTISTL, TPAEIRIPIYVMIIASVVSAV, LINAYAFGLYQSLGIFIPLIV, ALSALDGFSIGMGATCAMFVL, and PFLLAMLPPGAFIGLGLMLAG.

This sequence belongs to the NqrDE/RnfAE family. The complex is composed of six subunits: RsxA, RsxB, RsxC, RsxD, RsxE and RsxG.

The protein localises to the cell inner membrane. In terms of biological role, part of a membrane-bound complex that couples electron transfer with translocation of ions across the membrane. Required to maintain the reduced state of SoxR. This is Ion-translocating oxidoreductase complex subunit E from Shigella boydii serotype 18 (strain CDC 3083-94 / BS512).